A 317-amino-acid polypeptide reads, in one-letter code: Melanocyte-stimulating hormone receptor (317 aa).

Positions 1 to 20 are enriched in polar residues; sequence MPVQGSQRSLLGAVNSTPTA. The interval 1-23 is disordered; it reads MPVQGSQRSLLGAVNSTPTATPH. The Extracellular portion of the chain corresponds to 1–37; sequence MPVQGSQRSLLGAVNSTPTATPHLRPAANQTGPQCLE. N-linked (GlcNAc...) asparagine glycosylation is present at Asn29. A helical membrane pass occupies residues 38-63; it reads VSIPDGLFLCLGLVSLVENTLVVAAI. The Cytoplasmic segment spans residues 64–72; the sequence is AKNRNLHSP. The chain crosses the membrane as a helical span at residues 73 to 93; that stretch reads MYCFICCLALSDLLVSVSSVL. Residues 94-118 are Extracellular-facing; it reads ETAVLLLLGAGALAAQATVVQQLGN. The helical transmembrane segment at 119–140 threads the bilayer; the sequence is VIDVLLCSSMVSSLFFLGAIAM. The Cytoplasmic segment spans residues 141–163; the sequence is DRYISIFYALRYHSIVTLARARR. A helical transmembrane segment spans residues 164–183; sequence AIAAIWAASILSSTLFIAYC. Over 184 to 191 the chain is Extracellular; that stretch reads DRTAALLC. A helical transmembrane segment spans residues 192–211; sequence LVVFFLAMLVLMAVLYVHML. The Cytoplasmic segment spans residues 212 to 240; sequence TQARQHAQGIARLHKRQRPVQQGWGLKGA. The chain crosses the membrane as a helical span at residues 241 to 266; the sequence is ATLTILLGVFFLCWGPFFLHLTLIAV. At 267–279 the chain is on the extracellular side; that stretch reads CPQHPTCSCIFKN. The helical transmembrane segment at 280 to 300 threads the bilayer; it reads FRLFLALIVCNAIVDPLIYAF. Topologically, residues 301 to 317 are cytoplasmic; that stretch reads RSQELRKTLKEVLLFFW.

It belongs to the G-protein coupled receptor 1 family. In terms of assembly, interacts with MGRN1, but does not undergo MGRN1-mediated ubiquitination; this interaction competes with GNAS-binding and thus inhibits agonist-induced cAMP production. Interacts with OPN3; the interaction results in a decrease in MC1R-mediated cAMP signaling and ultimately a decrease in melanin production in melanocytes.

The protein resides in the cell membrane. Functionally, receptor for MSH (alpha, beta and gamma) and ACTH. The activity of this receptor is mediated by G proteins which activate adenylate cyclase. Mediates melanogenesis, the production of eumelanin (black/brown) and phaeomelanin (red/yellow), via regulation of cAMP signaling in melanocytes. The chain is Melanocyte-stimulating hormone receptor (MC1R) from Lemur catta (Ring-tailed lemur).